Here is a 256-residue protein sequence, read N- to C-terminus: 1-(5-phosphoribosyl)-5-[(5-phosphoribosylamino)methylideneamino] imidazole-4-carboxamide isomerase (256 aa).

Catalysis depends on aspartate 8, which acts as the Proton acceptor. Aspartate 130 serves as the catalytic Proton donor.

The protein belongs to the HisA/HisF family.

It localises to the cytoplasm. It carries out the reaction 1-(5-phospho-beta-D-ribosyl)-5-[(5-phospho-beta-D-ribosylamino)methylideneamino]imidazole-4-carboxamide = 5-[(5-phospho-1-deoxy-D-ribulos-1-ylimino)methylamino]-1-(5-phospho-beta-D-ribosyl)imidazole-4-carboxamide. It participates in amino-acid biosynthesis; L-histidine biosynthesis; L-histidine from 5-phospho-alpha-D-ribose 1-diphosphate: step 4/9. The polypeptide is 1-(5-phosphoribosyl)-5-[(5-phosphoribosylamino)methylideneamino] imidazole-4-carboxamide isomerase (Chlorobium phaeobacteroides (strain DSM 266 / SMG 266 / 2430)).